The following is a 170-amino-acid chain: Small ribosomal subunit protein bS18c (170 aa).

Disordered stretches follow at residues 1-60 (MYTS…GPGD) and 149-170 (NRNLRNNNQNLRNNNRNLSSDC). Repeats lie at residues 4 to 10 (SKQPFLK), 11 to 17 (SKQPFSK), 18 to 24 (SEQPFSK), 25 to 31 (SEQPFRK), 32 to 38 (SKQTFRK), 39 to 45 (FKQPFRK), and 46 to 52 (SKQPFRR). The 7 X 7 AA tandem repeats stretch occupies residues 4–52 (SKQPFLKSKQPFSKSEQPFSKSEQPFRKSKQTFRKFKQPFRKSKQPFRR). Polar residues predominate over residues 13-26 (QPFSKSEQPFSKSE). Positions 30–55 (RKSKQTFRKFKQPFRKSKQPFRRRPR) are enriched in basic residues.

The protein belongs to the bacterial ribosomal protein bS18 family. As to quaternary structure, part of the 30S ribosomal subunit.

It localises to the plastid. The protein localises to the chloroplast. In Secale cereale (Rye), this protein is Small ribosomal subunit protein bS18c (rps18).